Here is a 434-residue protein sequence, read N- to C-terminus: UDP-N-acetylglucosamine 1-carboxyvinyltransferase (434 aa).

22–23 (KN) serves as a coordination point for phosphoenolpyruvate. Arg97 provides a ligand contact to UDP-N-acetyl-alpha-D-glucosamine. Asp121 (proton donor) is an active-site residue. 2 residues coordinate UDP-N-acetyl-alpha-D-glucosamine: Asp319 and Met341.

This sequence belongs to the EPSP synthase family. MurA subfamily.

The protein resides in the cytoplasm. It carries out the reaction phosphoenolpyruvate + UDP-N-acetyl-alpha-D-glucosamine = UDP-N-acetyl-3-O-(1-carboxyvinyl)-alpha-D-glucosamine + phosphate. The protein operates within cell wall biogenesis; peptidoglycan biosynthesis. In terms of biological role, cell wall formation. Adds enolpyruvyl to UDP-N-acetylglucosamine. The sequence is that of UDP-N-acetylglucosamine 1-carboxyvinyltransferase from Porphyromonas gingivalis (strain ATCC BAA-308 / W83).